A 1266-amino-acid polypeptide reads, in one-letter code: Phosphatidylinositol 3,4,5-trisphosphate 5-phosphatase 2A (1266 aa).

The 97-residue stretch at 15–111 (WMHRDLSRAA…GLVTTLLYPV (97 aa)) folds into the SH2 domain. The span at 114 to 123 (EETTEDRDYS) shows a compositional bias: basic and acidic residues. Disordered stretches follow at residues 114–159 (EETT…NVTA) and 879–951 (DMGG…DATT). A compositionally biased stretch (polar residues) spans 136-159 (TASTSSMTGSALVSTDTPPENVTA). 2 stretches are compositionally biased toward basic and acidic residues: residues 915–924 (RVSEEGEKSS) and 931–944 (TKEENTHNRGKQDP). The NPXY motif signature appears at 958–961 (NPAY). Residue Tyr-961 is modified to Phosphotyrosine. Disordered stretches follow at residues 986–1132 (PLAN…SALD) and 1147–1174 (EVEYPSGRERGASQGPTGPQLRGLSFPS). The span at 994–1012 (PPAGSVGKSKPPSGSSAQG) shows a compositional bias: low complexity. Over residues 1045–1056 (RPPPDFPPPPLP) the composition is skewed to pro residues. The SAM domain occupies 1203-1266 (SVDCSVGEWL…LLASLKQQQK (64 aa)).

It belongs to the inositol 1,4,5-trisphosphate 5-phosphatase family. Tyrosine phosphorylated by the members of the SRC family after exposure to a diverse array of extracellular stimuli.

It localises to the cytoplasm. The protein resides in the cytosol. The protein localises to the cytoskeleton. Its subcellular location is the membrane. It is found in the cell projection. It localises to the filopodium. The protein resides in the lamellipodium. The protein localises to the nucleus. Its subcellular location is the nucleus speckle. It carries out the reaction a 1,2-diacyl-sn-glycero-3-phospho-(1D-myo-inositol-3,4,5-trisphosphate) + H2O = a 1,2-diacyl-sn-glycero-3-phospho-(1D-myo-inositol-3,4-bisphosphate) + phosphate. Functionally, phosphatidylinositol (PtdIns) phosphatase that specifically hydrolyzes the 5-phosphate of phosphatidylinositol-3,4,5-trisphosphate (PtdIns(3,4,5)P3) to produce PtdIns(3,4)P2, thereby negatively regulating the PI3K (phosphoinositide 3-kinase) pathways. Plays a central role in regulation of PI3K-dependent insulin signaling, although the precise molecular mechanisms and signaling pathways remain unclear. Part of a signaling pathway that regulates actin cytoskeleton remodeling. Required for the maintenance and dynamic remodeling of actin structures as well as in endocytosis, having a major impact on ligand-induced EGFR internalization and degradation. Participates in regulation of cortical and submembraneous actin. Regulates cell adhesion and cell spreading. Acts as a negative regulator of the FC-gamma-RIIA receptor (FCGR2A). Mediates signaling from the FC-gamma-RIIB receptor (FCGR2B), playing a central role in terminating signal transduction from activating immune/hematopoietic cell receptor systems. May also hydrolyze PtdIns(1,3,4,5)P4, and could thus affect the levels of the higher inositol polyphosphates like InsP6. The chain is Phosphatidylinositol 3,4,5-trisphosphate 5-phosphatase 2A (inppl1a) from Danio rerio (Zebrafish).